Consider the following 537-residue polypeptide: MTEDIMATSYPTFLTTPYLPMKLLMNLTNDTEDICVFDEGFKFLLLPVSYSAVFMVGLPLNIAAMWIFIAKMRPWNPTTVYMFNLALSDTLYVLSLPTLVYYYADKNNWPFGEVLCKLVRFLFYANLYSSILFLTCISVHRYRGVCHPITSLRRMNAKHAYVICALVWLSVTLCLVPNLIFVTVSPKVKNTICHDTTRPEDFARYVEYSTAIMCLLFGIPCLIIAGCYGLMTRELMKPIVSGNQQTLPSYKKRSIKTIIFVMIAFAICFMPFHITRTLYYYARLLGIKCYALNVINVTYKVTRPLASANSCIDPILYFLANDRYRRRLIRTVRRRSSVPNRRCMHTNHPQTEPHMTAGPLPVISAEEIPSNGSMVRDENGEGSREHRVEWTDTKEINQMMNRRSTIKRNSTDKNDMKENRHGENYLPYVEVVEKEDYETKRENRKTTEQSSKTNAEQDELQTQIDSRLKRGKWQLSSKKGAAQENEKGHMEPSFEGEGTSTWNLLTPKMYGKKDRLAKNVEEVGYGKEKELQNFPKA.

Residues 1–49 lie on the Extracellular side of the membrane; it reads MTEDIMATSYPTFLTTPYLPMKLLMNLTNDTEDICVFDEGFKFLLLPVS. Residues N26 and N29 are each glycosylated (N-linked (GlcNAc...) asparagine). The helical transmembrane segment at 50–70 threads the bilayer; sequence YSAVFMVGLPLNIAAMWIFIA. The Cytoplasmic segment spans residues 71–79; that stretch reads KMRPWNPTT. Residues 80-100 form a helical membrane-spanning segment; it reads VYMFNLALSDTLYVLSLPTLV. Over 101–118 the chain is Extracellular; that stretch reads YYYADKNNWPFGEVLCKL. A disulfide bridge connects residues C116 and C193. A helical membrane pass occupies residues 119–139; it reads VRFLFYANLYSSILFLTCISV. Residues 140 to 161 lie on the Cytoplasmic side of the membrane; the sequence is HRYRGVCHPITSLRRMNAKHAY. The chain crosses the membrane as a helical span at residues 162 to 182; it reads VICALVWLSVTLCLVPNLIFV. Over 183 to 210 the chain is Extracellular; the sequence is TVSPKVKNTICHDTTRPEDFARYVEYST. The helical transmembrane segment at 211-231 threads the bilayer; the sequence is AIMCLLFGIPCLIIAGCYGLM. Residues 232–254 are Cytoplasmic-facing; the sequence is TRELMKPIVSGNQQTLPSYKKRS. Residues 255 to 275 traverse the membrane as a helical segment; sequence IKTIIFVMIAFAICFMPFHIT. Residues 276–292 are Extracellular-facing; the sequence is RTLYYYARLLGIKCYAL. A helical transmembrane segment spans residues 293-316; the sequence is NVINVTYKVTRPLASANSCIDPIL. The Cytoplasmic segment spans residues 317–537; it reads YFLANDRYRR…EKELQNFPKA (221 aa). The interval 401–505 is disordered; that stretch reads NRRSTIKRNS…GEGTSTWNLL (105 aa). 2 stretches are compositionally biased toward basic and acidic residues: residues 409 to 423 and 431 to 447; these read NSTD…RHGE and VVEK…RKTT. Residues 448 to 465 show a composition bias toward polar residues; it reads EQSSKTNAEQDELQTQID.

The protein belongs to the G-protein coupled receptor 1 family.

The protein resides in the cell membrane. Functionally, receptor for extracellular ATP, UTP, CTP, GTP and ITP. The activity of this receptor is mediated by G proteins which activate a phosphatidylinositol-calcium second messenger system. May play a key role in the early development of neural tissue. In Xenopus laevis (African clawed frog), this protein is P2Y purinoceptor 4 (p2ry4).